A 206-amino-acid polypeptide reads, in one-letter code: Venom allergen 5 (206 aa).

Cystine bridges form between cysteine 5–cysteine 18, cysteine 9–cysteine 103, cysteine 28–cysteine 96, and cysteine 172–cysteine 189. The 145-residue stretch at 47 to 191 (LKVHNDFRQK…WYTHYLVCNY (145 aa)) folds into the SCP domain.

The protein belongs to the CRISP family. Venom allergen 5-like subfamily. As to expression, expressed by the venom gland.

The protein localises to the secreted. This Vespula vidua (Ground hornet) protein is Venom allergen 5.